Consider the following 695-residue polypeptide: Polyribonucleotide nucleotidyltransferase (695 aa).

The Mg(2+) site is built by D488 and D494. In terms of domain architecture, KH spans 554-613 (PKTTIIKIKTDKIRDLIGRGGETIKGIISTSCASIDVDDSGNVNIFSNNQKSFDTAVQMV). Residues 623 to 690 (NKVYTGKVVK…DRGRIKLSRK (68 aa)) form the S1 motif domain.

The protein belongs to the polyribonucleotide nucleotidyltransferase family. Component of the RNA degradosome, which is a multiprotein complex involved in RNA processing and mRNA degradation. Requires Mg(2+) as cofactor.

The protein localises to the cytoplasm. It carries out the reaction RNA(n+1) + phosphate = RNA(n) + a ribonucleoside 5'-diphosphate. Functionally, involved in mRNA degradation. Catalyzes the phosphorolysis of single-stranded polyribonucleotides processively in the 3'- to 5'-direction. This is Polyribonucleotide nucleotidyltransferase from Vesicomyosocius okutanii subsp. Calyptogena okutanii (strain HA).